Here is a 386-residue protein sequence, read N- to C-terminus: MLNPHGGKLINKIATEEERKDLTEKAKTLKKIVIADRYVSDCEMIANGGFSPLDGFMTKEDAESVINDIQLKNGLLWAIPIVLPVGEDVFNQIKIGDEVALYDRHNRPIAIMVVEDKYTLDLENYCKNVFKTTDIEHPGVKVVKSAGNKFIGGEIIRLLNRPVREGIDEKYYLDPAQVRENIKNKGWKKIVAFQTRNPIHRAHEYIIKVALEPMDGVMIHPLVGETKPDDIPADVRMKCYEVLIDNYFNREKVHLSVLPASMHYAGPREAIHHMLMRKNYGATHMIIGRDHAGVGDYYGTYEAQEFVEQFVDQLEIQPLKFEHSFYCTKCENMASFKTCPHPKEDHIHLSGTKVRAMLREGKRPPKEFSRPEVADILIKWATGKNG.

This sequence belongs to the sulfate adenylyltransferase family.

It carries out the reaction sulfate + ATP + H(+) = adenosine 5'-phosphosulfate + diphosphate. It functions in the pathway sulfur metabolism; hydrogen sulfide biosynthesis; sulfite from sulfate: step 1/3. This Persephonella marina (strain DSM 14350 / EX-H1) protein is Sulfate adenylyltransferase.